A 67-amino-acid polypeptide reads, in one-letter code: Large ribosomal subunit protein uL30 (67 aa).

The protein belongs to the universal ribosomal protein uL30 family. As to quaternary structure, part of the 50S ribosomal subunit.

The sequence is that of Large ribosomal subunit protein uL30 from Hamiltonella defensa subsp. Acyrthosiphon pisum (strain 5AT).